A 1336-amino-acid chain; its full sequence is Cytokinesis protein sepH (1336 aa).

Positions 1-10 (MVSRSSETSE) are enriched in low complexity. A disordered region spans residues 1-46 (MVSRSSETSEGPPPPSKIPGTPAKTRLSRLNSSPAKQDKPKDDRVV). The span at 36–46 (KQDKPKDDRVV) shows a compositional bias: basic and acidic residues. The Protein kinase domain maps to 59–309 (YQLGDCLGKG…ARKLLKHPWI (251 aa)). ATP contacts are provided by residues 65–73 (LGKGAFGSV) and lysine 88. The active-site Proton acceptor is the aspartate 181. A disordered region spans residues 368 to 402 (SRYTPTKDILPSPVSKHVTDRFRSPDSTEEDNWDD). Residues 384 to 393 (HVTDRFRSPD) are compositionally biased toward basic and acidic residues. Positions 654 to 682 (AQLEEGLDEVDLEANIARDKYARLRGQVE) form a coiled coil. The segment covering 1194 to 1205 (ERSESFSLEKRK) has biased composition (basic and acidic residues). Residues 1194 to 1336 (ERSESFSLEK…PTHADSDWAS (143 aa)) are disordered. Residues 1213-1236 (TSTTPPGYLANQSAPATPQINRFN) are compositionally biased toward polar residues. Low complexity-rich tracts occupy residues 1253-1264 (PSLSSSALALRP) and 1272-1285 (PSLS…AGPS). Residues 1315–1327 (SRRRSILPQRRRP) show a composition bias toward basic residues.

The protein belongs to the protein kinase superfamily. Ser/Thr protein kinase family. CDC7 subfamily. Requires Mg(2+) as cofactor.

It catalyses the reaction L-seryl-[protein] + ATP = O-phospho-L-seryl-[protein] + ADP + H(+). The catalysed reaction is L-threonyl-[protein] + ATP = O-phospho-L-threonyl-[protein] + ADP + H(+). Required for early events during cytokinesis including localization of cytoskeletal components to the cytokinetic ring. The polypeptide is Cytokinesis protein sepH (Aspergillus niger (strain ATCC MYA-4892 / CBS 513.88 / FGSC A1513)).